The sequence spans 530 residues: GMP synthase [glutamine-hydrolyzing] (530 aa).

One can recognise a Glutamine amidotransferase type-1 domain in the interval 4–205 (RILILDYGSQ…VKDICGCEGD (202 aa)). C84 (nucleophile) is an active-site residue. Active-site residues include H179 and E181. Residues 206-398 (WNMPDYISEA…LGLPPQMVYR (193 aa)) form the GMPS ATP-PPase domain. 233-239 (SGGVDSS) contacts ATP.

In terms of assembly, homodimer.

The enzyme catalyses XMP + L-glutamine + ATP + H2O = GMP + L-glutamate + AMP + diphosphate + 2 H(+). It participates in purine metabolism; GMP biosynthesis; GMP from XMP (L-Gln route): step 1/1. Functionally, catalyzes the synthesis of GMP from XMP. This chain is GMP synthase [glutamine-hydrolyzing], found in Bordetella bronchiseptica (strain ATCC BAA-588 / NCTC 13252 / RB50) (Alcaligenes bronchisepticus).